Consider the following 726-residue polypeptide: Catalase-peroxidase (726 aa).

Residues 90–213 (WHAAGTYRIG…LAAVQMGLIY (124 aa)) constitute a cross-link (tryptophyl-tyrosyl-methioninium (Trp-Tyr) (with M-239)). His91 (proton acceptor) is an active-site residue. Positions 213–239 (YVNPEGPNGNPDPLAAARDIRETFARM) form a cross-link, tryptophyl-tyrosyl-methioninium (Tyr-Met) (with W-90). His254 lines the heme b pocket. The disordered stretch occupies residues 334–359 (AHQWKPKHGAGANTVPDAHDPSKRHA).

The protein belongs to the peroxidase family. Peroxidase/catalase subfamily. Homodimer or homotetramer. The cofactor is heme b. Post-translationally, formation of the three residue Trp-Tyr-Met cross-link is important for the catalase, but not the peroxidase activity of the enzyme.

The enzyme catalyses H2O2 + AH2 = A + 2 H2O. It catalyses the reaction 2 H2O2 = O2 + 2 H2O. Its function is as follows. Bifunctional enzyme with both catalase and broad-spectrum peroxidase activity. In Bradyrhizobium sp. (strain BTAi1 / ATCC BAA-1182), this protein is Catalase-peroxidase.